We begin with the raw amino-acid sequence, 603 residues long: UvrABC system protein C (603 aa).

The GIY-YIG domain maps to 17 to 94 (TTSGCYKMLN…IKTHKPDYNV (78 aa)). Residues 199–234 (SEILSQIDIKLKLAVQKEDFETAIKLKEMKSSLIEI) form the UVR domain.

The protein belongs to the UvrC family. As to quaternary structure, interacts with UvrB in an incision complex.

It localises to the cytoplasm. The UvrABC repair system catalyzes the recognition and processing of DNA lesions. UvrC both incises the 5' and 3' sides of the lesion. The N-terminal half is responsible for the 3' incision and the C-terminal half is responsible for the 5' incision. This is UvrABC system protein C from Borrelia garinii subsp. bavariensis (strain ATCC BAA-2496 / DSM 23469 / PBi) (Borreliella bavariensis).